The primary structure comprises 218 residues: Uracil-DNA glycosylase (218 aa).

Aspartate 59 acts as the Proton acceptor in catalysis.

It belongs to the uracil-DNA glycosylase (UDG) superfamily. UNG family.

It is found in the cytoplasm. The enzyme catalyses Hydrolyzes single-stranded DNA or mismatched double-stranded DNA and polynucleotides, releasing free uracil.. Functionally, excises uracil residues from the DNA which can arise as a result of misincorporation of dUMP residues by DNA polymerase or due to deamination of cytosine. This Staphylococcus aureus (strain JH1) protein is Uracil-DNA glycosylase.